A 323-amino-acid polypeptide reads, in one-letter code: Elongation factor P--(R)-beta-lysine ligase (323 aa).

A substrate-binding site is contributed by 74–76 (SPE). ATP contacts are provided by residues 98–100 (RNE) and N107. A substrate-binding site is contributed by Y116. Residue 242-243 (EL) participates in ATP binding. E249 lines the substrate pocket. Residue G298 participates in ATP binding.

This sequence belongs to the class-II aminoacyl-tRNA synthetase family. EpmA subfamily. As to quaternary structure, homodimer.

The enzyme catalyses D-beta-lysine + L-lysyl-[protein] + ATP = N(6)-((3R)-3,6-diaminohexanoyl)-L-lysyl-[protein] + AMP + diphosphate + H(+). Its function is as follows. With EpmB is involved in the beta-lysylation step of the post-translational modification of translation elongation factor P (EF-P). Catalyzes the ATP-dependent activation of (R)-beta-lysine produced by EpmB, forming a lysyl-adenylate, from which the beta-lysyl moiety is then transferred to the epsilon-amino group of a conserved specific lysine residue in EF-P. In Vibrio vulnificus (strain YJ016), this protein is Elongation factor P--(R)-beta-lysine ligase.